A 281-amino-acid polypeptide reads, in one-letter code: NADH-cytochrome b5 reductase 1 (281 aa).

A helical transmembrane segment spans residues V2 to V22. An FAD-binding FR-type domain is found at E37–Q141. FAD-binding positions include A121–G136 and E147–L179.

It belongs to the flavoprotein pyridine nucleotide cytochrome reductase family. Monomer. Component of the 2-(3-amino-3-carboxypropyl)histidine synthase complex composed of DPH1, DPH2, DPH3 and a NADH-dependent reductase, predominantly CBR1. Requires FAD as cofactor.

The protein resides in the mitochondrion outer membrane. It carries out the reaction 2 Fe(III)-[cytochrome b5] + NADH = 2 Fe(II)-[cytochrome b5] + NAD(+) + H(+). The catalysed reaction is 2 Fe(3+)-[Dph3] + NADH = 2 Fe(2+)-[Dph3] + NAD(+) + H(+). Its pathway is protein modification; peptidyl-diphthamide biosynthesis. In terms of biological role, NADH-dependent reductase for DPH3 and cytochrome b5. Required for the first step of diphthamide biosynthesis, a post-translational modification of histidine which occurs in elongation factor 2. DPH1 and DPH2 transfer a 3-amino-3-carboxypropyl (ACP) group from S-adenosyl-L-methionine (SAM) to a histidine residue, the reaction is assisted by a reduction system comprising DPH3 and a NADH-dependent reductase, predominantly CBR1. By reducing DPH3, also involved in the formation of the tRNA wobble base modification mcm5s 2U (5-methoxycarbonylmethyl-2-thiouridine), mediated by the elongator complex. The cytochrome b5/NADH cytochrome b5 reductase electron transfer system supports the catalytic activity of several sterol biosynthetic enzymes. This chain is NADH-cytochrome b5 reductase 1 (CBR1), found in Kluyveromyces lactis (strain ATCC 8585 / CBS 2359 / DSM 70799 / NBRC 1267 / NRRL Y-1140 / WM37) (Yeast).